A 1048-amino-acid chain; its full sequence is MEGEREGVVAKNEDNAGGGGGGLGTGGNGGGGGGGSANGRRRWRGGGSSGYRQHPIIQAYPALLPLPINGATGHAHINGAVSLPLPLPPPVLLYLQPPPPPPLLPLLPKVAAATFYGKPPKAADAAPRGSMWKHRPSKKPPPHAITAALLPLPRDGKALQEKIFFANERKTSEKEVNHVDTHEKFTVAPLDNAIARRPDMGGVEGAEIPLSANHFLVQFDPGQKIFHYNVDISPRPSKETARMIKKKLVEENPSVLSGSQPAFDGRKNLYSPVRFQEDRVEFFVSLPVALARCSVVKEDTGHMLDKQKLKTFKVNVRLVSKLCGEDLNKYLNEDKDGIPLPQDYLHALDVVLREGAMESSILVGRSLYARSMGEARDIGGGAVGLRGFFQRLRPTKQGLALNVDLSLSAFHESTGIISYLQKRCDFLKDLPQKKTRALAEEEHREVEKALKNIRVFVCHRETNQRYHVHSLTKETTENLKFRDRSGKDLMVVDYFKEHYNHDIQFRNLPCLQIGRSKPCYVPMELCVVCEGQKFLGKLSDEQTSKILKMGCERPSERKGIIKGVVKGAFHARSDTYADQFSLQVSKHMTKLSGRVLLPPKLKLGSSGRIKDITPDRFDRQWSFLDSHVAEGSKIKSWALISFGGTPEQHFCITKFVNQLSNRCEQLGILLNKKTIISPIFERIQLLNNVGILEGKLKKIQEAASGNLQLLICVMERRHQGYADLKRIAETSIGVVTQCCLYSNLSKLTSQFLTNLALKINAKLGGCNIALYSSFPCQIPRIFLSEEPVMFMGADVTHPHPLDDSSPSVVAVVASMNWPSANKYISRMRSQTHRKEIIEQLDVMAGELLEEFLKEVGKLPSRIIFFRDGVSETQFYKVLKEEMHAVRTTCSRYPGYKPLITFIVVQKRHHTRLFHRERNGSSSHYSDQNIPPGTVVDTVITHPREFDFYLCSHWGTKGTSRPTHYHVLWDENNFRSDEVQQLIHNLCYTFARCTRPVSLVPPAYYAHLAAYRGRLYLERSDTTMYRVSPLQTVPLPKLRDNVKRLMFYC.

The segment covering 1–14 has biased composition (basic and acidic residues); that stretch reads MEGEREGVVAKNED. Disordered stretches follow at residues 1–50 and 121–141; these read MEGE…GSSG and KAAD…KKPP. The segment covering 16–37 has biased composition (gly residues); that stretch reads AGGGGGGLGTGGNGGGGGGGSA. Residues 131 to 141 show a composition bias toward basic residues; the sequence is MWKHRPSKKPP. Residues 422 to 530 enclose the PAZ domain; sequence KRCDFLKDLP…VPMELCVVCE (109 aa). The Piwi domain occupies 709–1017; that stretch reads LLICVMERRH…AAYRGRLYLE (309 aa).

This sequence belongs to the argonaute family. Ago subfamily. Expressed in the reproductive shoot apex.

Involved in the RNA silencing pathway. May bind to short RNAs such as microRNAs (miRNAs) or short interfering RNAs (siRNAs), and represses the translation of mRNAs which are complementary to them. Regulates shoot apical meristem (SAM) initiation and maintenance and leaf polarization through the trans-acting siRNAS (ta-siRNAs) pathway which probably modulates the expression of the ARF2, ARF3, ARF4, ARF14 and ARF15 genes. The sequence is that of Protein argonaute 7 (AGO7) from Oryza sativa subsp. japonica (Rice).